We begin with the raw amino-acid sequence, 843 residues long: Beta-mannosidase B (843 aa).

The active-site Proton donor is E430. N-linked (GlcNAc...) asparagine glycosylation is present at N721.

This sequence belongs to the glycosyl hydrolase 2 family. Beta-mannosidase B subfamily.

It carries out the reaction Hydrolysis of terminal, non-reducing beta-D-mannose residues in beta-D-mannosides.. It participates in glycan metabolism; N-glycan degradation. Exoglycosidase that cleaves the single beta-linked mannose residue from the non-reducing end of beta-mannosidic oligosaccharides of various complexity and length. Prefers mannobiose over mannotriose and has no activity against polymeric mannan. Is also severely restricted by galactosyl substitutions at the +1 subsite. This Aspergillus terreus (strain NIH 2624 / FGSC A1156) protein is Beta-mannosidase B (mndB).